Reading from the N-terminus, the 229-residue chain is (S)-2-haloacid dehalogenase 2 (229 aa).

Asp-10 (nucleophile) is an active-site residue. Residues 11–12 (LY), Arg-41, and 118–119 (SN) each bind an (S)-2-haloacid. An important for catalytic activity region spans residues 175–180 (SSNAWD).

This sequence belongs to the HAD-like hydrolase superfamily. S-2-haloalkanoic acid dehalogenase family.

The enzyme catalyses an (S)-2-haloacid + H2O = a (2R)-2-hydroxycarboxylate + a halide anion + H(+). It carries out the reaction (S)-2-chloropropanoate + H2O = (R)-lactate + chloride + H(+). Functionally, catalyzes the hydrolytic dehalogenation of small (S)-2-haloalkanoic acids to yield the corresponding (R)-2-hydroxyalkanoic acids. Acts on acids of short chain lengths, C(2) to C(4), with inversion of configuration at C-2. Active with 2-halogenated carboxylic acids and converts only the S-isomer (or L-isomer) of 2-chloropropionic acid with inversion of configuration to produce R-lactate (or D-isomer). The sequence is that of (S)-2-haloacid dehalogenase 2 from Pseudomonas sp. (strain CBS-3).